The primary structure comprises 177 residues: Large ribosomal subunit protein uL6 (177 aa).

The protein belongs to the universal ribosomal protein uL6 family. Part of the 50S ribosomal subunit.

In terms of biological role, this protein binds to the 23S rRNA, and is important in its secondary structure. It is located near the subunit interface in the base of the L7/L12 stalk, and near the tRNA binding site of the peptidyltransferase center. The sequence is that of Large ribosomal subunit protein uL6 from Cereibacter sphaeroides (strain ATCC 17029 / ATH 2.4.9) (Rhodobacter sphaeroides).